A 766-amino-acid polypeptide reads, in one-letter code: Slit homolog 2 protein (766 aa).

An N-terminal signal peptide occupies residues 1 to 30 (MSGIGWQTLSLSLALVLSILNKVAPHACPA). In terms of domain architecture, LRRNT spans 31–55 (QCSCSGSTVDCHGLALRIVPRNIPR). LRR repeat units follow at residues 56–77 (NTER…DFAG), 80–101 (HLRI…AFHD), 104–125 (ELER…LFLG), 128–149 (KLYR…AFRG), 152–173 (DIKN…AFRA), and 176–197 (DLEV…SFNH). Asn-66 carries an N-linked (GlcNAc...) asparagine glycan. Asn-186 carries N-linked (GlcNAc...) asparagine glycosylation. An LRRCT 1 domain is found at 209 to 259 (NNLYCDCHLAWLSDWLRQRPRVGLYTQCMGPSHLRGHNVAEVQKREFVCSD). In terms of domain architecture, LRRNT 2 spans 268-304 (MAPSCSVLHCPIACTCSNNIVDCRGKGLTEIPTNLPE). Cys-281 and Cys-290 are oxidised to a cystine. LRR repeat units lie at residues 305 to 326 (TITE…AFSP), 329 to 350 (KLRR…AFQG), 353 to 374 (SLNS…LFEG), 377 to 398 (SLQL…AFQD), and 401 to 422 (NLNL…TFSA). Residues 434–484 (NPFICDCHLKWLADYLHTNPIETSGARCTSPRRLANKRIGQIKSKKFRCSG) form the LRRCT 2 domain. 4 cysteine pairs are disulfide-bonded: Cys-438–Cys-461, Cys-440–Cys-482, Cys-502–Cys-508, and Cys-506–Cys-515. Residues 493–529 (SGDCFADLACPEKCRCEGTTVDCSNQKLNKIPDHIPQ) form the LRRNT 3 domain. LRR repeat units lie at residues 530–551 (YTAE…GIFK), 555–576 (QLRK…AFEG), 579–600 (GVNE…MFKG), 603–624 (SLKT…SFTG), and 627–648 (SVRL…AFGT). Asn-560 carries N-linked (GlcNAc...) asparagine glycosylation. Asn-619 is a glycosylation site (N-linked (GlcNAc...) asparagine). The LRRCT 3 domain maps to 660-710 (NPFNCNCHLAWLGEWLRRKRIVTGNPRCQKPYFLKEIPIQDVAIQDFTCDD). Disulfide bonds link Cys-664–Cys-687, Cys-666–Cys-708, Cys-723–Cys-729, and Cys-727–Cys-736. Residues 714–750 (DNSCSPLSRCPSECTCLDTVVRCSNKGLKVLPKGIPR) form the LRRNT 4 domain.

Homodimer. Binds ROBO1 and ROBO2 with high affinity. Interacts with GREM1.

Its subcellular location is the secreted. Thought to act as molecular guidance cue in cellular migration, and function appears to be mediated by interaction with roundabout homolog receptors. During neural development involved in axonal navigation at the ventral midline of the neural tube and projection of axons to different regions. SLIT1 and SLIT2 seem to be essential for midline guidance in the forebrain by acting as repulsive signal preventing inappropriate midline crossing by axons projecting from the olfactory bulb. In spinal cord development may play a role in guiding commissural axons once they reached the floor plate by modulating the response to netrin. In vitro, silences the attractive effect of NTN1 but not its growth-stimulatory effect and silencing requires the formation of a ROBO1-DCC complex. May be implicated in spinal cord midline post-crossing axon repulsion. In vitro, only commissural axons that crossed the midline responded to SLIT2. In the developing visual system appears to function as repellent for retinal ganglion axons by providing a repulsion that directs these axons along their appropriate paths prior to, and after passage through, the optic chiasm. In vitro, collapses and repels retinal ganglion cell growth cones. Seems to play a role in branching and arborization of CNS sensory axons, and in neuronal cell migration. Seems to be involved in regulating leukocyte migration. The polypeptide is Slit homolog 2 protein (Slit2) (Rattus norvegicus (Rat)).